The following is an 849-amino-acid chain: Disks large homolog 3 (849 aa).

The disordered stretch occupies residues 32 to 101 (DWQVPDPYGP…GKNTPKLNGS (70 aa)). Over residues 41–53 (PSGGNGASSGYGG) the composition is skewed to gly residues. A compositionally biased stretch (polar residues) spans 57–69 (QTLPSQAGATPTP). PDZ domains follow at residues 149–235 (EIVL…VRRR), 244–330 (EVNL…VAKP), and 404–484 (KIIL…AQYR). Phosphoserine is present on S157. An SH3 domain is found at 519–589 (KRSLYVRALF…PSKKRVEKKE (71 aa)). The Guanylate kinase-like domain occupies 659–834 (ARPVIILGPM…IYNKIKQIIE (176 aa)). Position 705 is a phosphotyrosine (Y705).

This sequence belongs to the MAGUK family. As to quaternary structure, interacts through its PDZ domains with NETO1 and APC. Interacts through its first two PDZ domains with ERBB4. Interacts through its third PDZ domain with NLGN1, and probably with NLGN2 and NLGN3. Interacts through its PDZ domains with GRIN2B and SYNGAP1. Interacts through its guanylate kinase-like domain with DLGAP1, DLGAP2, DLGAP3 and DLGAP4. Interacts with FRMPD4 (via C-terminus). Interacts with LRFN2. Interacts with LRFN1 and LRFN4. Interacts with FLTP. Interacts with DGKI (via PDZ-binding motif).

Its function is as follows. Required for learning most likely through its role in synaptic plasticity following NMDA receptor signaling. The polypeptide is Disks large homolog 3 (Dlg3) (Rattus norvegicus (Rat)).